The primary structure comprises 192 residues: Xanthine phosphoribosyltransferase (192 aa).

The xanthine site is built by L20 and N27. 128–132 (AHGEA) contacts 5-phospho-alpha-D-ribose 1-diphosphate. K156 serves as a coordination point for xanthine.

The protein belongs to the purine/pyrimidine phosphoribosyltransferase family. Xpt subfamily. As to quaternary structure, homodimer.

The protein localises to the cytoplasm. It catalyses the reaction XMP + diphosphate = xanthine + 5-phospho-alpha-D-ribose 1-diphosphate. The protein operates within purine metabolism; XMP biosynthesis via salvage pathway; XMP from xanthine: step 1/1. Functionally, converts the preformed base xanthine, a product of nucleic acid breakdown, to xanthosine 5'-monophosphate (XMP), so it can be reused for RNA or DNA synthesis. The chain is Xanthine phosphoribosyltransferase from Lactobacillus acidophilus (strain ATCC 700396 / NCK56 / N2 / NCFM).